The following is a 346-amino-acid chain: Uroporphyrinogen decarboxylase (346 aa).

Substrate contacts are provided by residues 26–30, Asp76, Tyr153, Ser208, and His323; that span reads RQAGR.

It belongs to the uroporphyrinogen decarboxylase family. As to quaternary structure, homodimer.

The protein resides in the cytoplasm. It catalyses the reaction uroporphyrinogen III + 4 H(+) = coproporphyrinogen III + 4 CO2. The protein operates within porphyrin-containing compound metabolism; protoporphyrin-IX biosynthesis; coproporphyrinogen-III from 5-aminolevulinate: step 4/4. In terms of biological role, catalyzes the decarboxylation of four acetate groups of uroporphyrinogen-III to yield coproporphyrinogen-III. The chain is Uroporphyrinogen decarboxylase from Prochlorococcus marinus (strain MIT 9312).